Consider the following 597-residue polypeptide: Sodium/mannose cotransporter SLC5A10 (597 aa).

The Extracellular portion of the chain corresponds to 1–16 (MAVDNSTSDAHTPGRQ). An N-linked (GlcNAc...) asparagine glycan is attached at Asn-5. A helical transmembrane segment spans residues 17 to 37 (LTVVDIAIIAVYFALNVAVGI). At 38–73 (WSSCRASRNTVRGYFLAGRDMTWWPIGASLFASSEG) the chain is on the cytoplasmic side. Residues 74-94 (SGLFIGLAGSGAAGGLAVAGF) traverse the membrane as a helical segment. Residues 95-100 (EWNATY) are Extracellular-facing. An N-linked (GlcNAc...) asparagine glycan is attached at Asn-97. A helical membrane pass occupies residues 101 to 121 (VLLALAWVFVPIYLSSEIVTM). At 122 to 139 (PEYMQKRYGGQRIRMYLS) the chain is on the cytoplasmic side. The helical transmembrane segment at 140–162 (VLSLLLSVFTKISIDLYAGALFV) threads the bilayer. Residues 163 to 174 (HICLGWNFYLST) lie on the Extracellular side of the membrane. Residues 175 to 195 (VIMLAITALYTIAGGLTAVIY) form a helical membrane-spanning segment. Residues 196 to 201 (TDALQT) lie on the Cytoplasmic side of the membrane. The helical transmembrane segment at 202-222 (LVMVAGAVILTIKAFEQIGGY) threads the bilayer. Over 223–265 (EQLAEAYAQAVPSRTISNTTCHVPRADAMHMFRDPYTADLPWT) the chain is Extracellular. Residues 266–286 (GMTFGLTIMAAWYWCTDQVIV) form a helical membrane-spanning segment. Over 287 to 301 (QRSLSARDLNHAKGG) the chain is Cytoplasmic. A helical membrane pass occupies residues 302–322 (SILASYLKMLPMGLMVMPGMI). At 323 to 367 (SRVLFPDDVGCVVPAECLRACGAEIGCSNIAYPKLVMELMPTGLR) the chain is on the extracellular side. The chain crosses the membrane as a helical span at residues 368–388 (GLMVAVMMAALMSSLTSIFNS). Topologically, residues 389–410 (SSTLFTMDIWRRLRPRAGEREL) are cytoplasmic. A helical transmembrane segment spans residues 411–431 (LLVGRLVIVVLVGVSVAWIPV). Residues 432 to 444 (LQGSNGGQLFIYM) lie on the Extracellular side of the membrane. A helical transmembrane segment spans residues 445–465 (QSVTSSLAPPVTAVFVLGIFW). Topologically, residues 466–472 (RRANEQG) are cytoplasmic. Residues 473 to 493 (AFWGLMAGLAVGATRLVLEFL) form a helical membrane-spanning segment. Topologically, residues 494 to 514 (HPAPPCGHPDTRPPILHGVHY) are extracellular. A helical membrane pass occupies residues 515 to 535 (LHFAVALFLLSGAVVVAGSLL). Residues 536–576 (TPHPQGVQIQSLTWWTLAQDLPLGVKTGDGRASQRHAFWAR) are Cytoplasmic-facing. The helical transmembrane segment at 577 to 597 (VCGVNAILLMCVNIFFYTYFA) threads the bilayer.

The protein belongs to the sodium:solute symporter (SSF) (TC 2.A.21) family. Predominantyl expressed in kidney. Also detected at very low levels in testes, skeletal muscle, and spleen.

The protein resides in the apical cell membrane. The catalysed reaction is D-mannose(out) + Na(+)(out) = D-mannose(in) + Na(+)(in). The enzyme catalyses D-fructopyranose(out) + Na(+)(out) = D-fructopyranose(in) + Na(+)(in). Functionally, electrogenic Na+-coupled sugar symporter that actively transports D-mannose or D-fructose at the plasma membrane, with a Na+ to sugar coupling ratio of 1:1. Transporter activity is driven by a transmembrane Na+ electrochemical gradient set by the Na+/K+ pump. Exclusively recognizes sugar substrates having a pyranose ring with an axial hydroxyl group on carbon 2. Has likely evolved to enable renal reabsorption of D-mannose, an important constituent of oligosaccharide chains of glycoproteins. Contributes to dietary D-fructose reabsorption from glomerular filtrate across the brush border of the kidney. This chain is Sodium/mannose cotransporter SLC5A10 (SLC5A10), found in Bos taurus (Bovine).